The sequence spans 236 residues: 7-cyano-7-deazaguanine synthase (236 aa).

ATP is bound at residue 7 to 17 (CSGGLDSVTLA). Residues Cys-185, Cys-193, Cys-196, and Cys-199 each coordinate Zn(2+).

Belongs to the QueC family. The cofactor is Zn(2+).

It catalyses the reaction 7-carboxy-7-deazaguanine + NH4(+) + ATP = 7-cyano-7-deazaguanine + ADP + phosphate + H2O + H(+). The protein operates within purine metabolism; 7-cyano-7-deazaguanine biosynthesis. Catalyzes the ATP-dependent conversion of 7-carboxy-7-deazaguanine (CDG) to 7-cyano-7-deazaguanine (preQ(0)). This is 7-cyano-7-deazaguanine synthase from Rhizobium johnstonii (strain DSM 114642 / LMG 32736 / 3841) (Rhizobium leguminosarum bv. viciae).